The sequence spans 199 residues: Adenylate kinase (199 aa).

An ATP-binding site is contributed by 8-13 (GAGKGT). Positions 28–57 (STGDIFRANIKNKTELGQQVKAIVDAGDYV) are NMP. Residues Thr-29, Arg-34, 55–57 (DYV), 83–86 (GYPR), and Gln-90 each bind AMP. An LID region spans residues 124–134 (KRAREQGRADD). Residue Arg-125 coordinates ATP. Positions 131 and 142 each coordinate AMP. Gly-170 lines the ATP pocket.

This sequence belongs to the adenylate kinase family. Monomer.

It is found in the cytoplasm. The enzyme catalyses AMP + ATP = 2 ADP. It functions in the pathway purine metabolism; AMP biosynthesis via salvage pathway; AMP from ADP: step 1/1. Functionally, catalyzes the reversible transfer of the terminal phosphate group between ATP and AMP. Plays an important role in cellular energy homeostasis and in adenine nucleotide metabolism. The chain is Adenylate kinase from Leifsonia xyli subsp. xyli (strain CTCB07).